A 396-amino-acid polypeptide reads, in one-letter code: DnaJ homolog subfamily A member 1 (396 aa).

Residues 6–68 enclose the J domain; it reads TYYDVLGVKP…KKRELYDKGG (63 aa). Lys66 is subject to N6-acetyllysine. Ser83 carries the phosphoserine modification. Residues 120–204 form a CR-type zinc finger; it reads GATRKLALQK…CNGRKIVREK (85 aa). Residues Cys133, Cys136, Cys149, Cys152, Cys176, Cys179, Cys192, and Cys195 each contribute to the Zn(2+) site. CXXCXGXG motif repeat units lie at residues 133–140, 149–156, 176–183, and 192–199; these read CDKCEGRG, CPNCRGTG, CMECQGHG, and CKSCNGRK. Ser334 bears the Phosphoserine mark. A disordered region spans residues 351–396; it reads VEETDEMDQVELVDFDPNQERRRHYNGEAYEDDEHHPRGGVQCQTS. The span at 352–364 shows a compositional bias: acidic residues; sequence EETDEMDQVELVD. Tyr380 carries the post-translational modification Phosphotyrosine. A Cysteine methyl ester modification is found at Cys393. Cys393 carries S-farnesyl cysteine lipidation. Residues 394 to 396 constitute a propeptide, removed in mature form; sequence QTS.

Identified in a complex with HSPA1B and BAX. Interacts with RNF207.

It localises to the membrane. Its subcellular location is the cytoplasm. The protein localises to the microsome. It is found in the mitochondrion. The protein resides in the nucleus. It localises to the perinuclear region. Its function is as follows. Co-chaperone for HSPA8/Hsc70. Plays a role in protein transport into mitochondria via its role as co-chaperone. Functions as co-chaperone for HSPA1B and negatively regulates the translocation of BAX from the cytosol to mitochondria in response to cellular stress, thereby protecting cells against apoptosis. Stimulates ATP hydrolysis, but not the folding of unfolded proteins mediated by HSPA1A (in vitro). Promotes apoptosis in response to cellular stress mediated by exposure to anisomycin or UV. The protein is DnaJ homolog subfamily A member 1 (DNAJA1) of Pongo abelii (Sumatran orangutan).